The primary structure comprises 396 residues: Purine ribonucleoside efflux pump NepI (396 aa).

Residues 1–21 lie on the Cytoplasmic side of the membrane; that stretch reads MSEFIAENRGADAITRPNWSA. A helical membrane pass occupies residues 22-42; sequence VFSVAFCVACLIIVEFLPVSL. Residues 43 to 54 are Periplasmic-facing; that stretch reads LTPMAQDLGISE. The helical transmembrane segment at 55–75 threads the bilayer; that stretch reads GVAGQSVTVTAFVAMFASLFI. The Cytoplasmic portion of the chain corresponds to 76–85; it reads TQTIQATDRC. Residues 86–106 form a helical membrane-spanning segment; sequence YVVILFAVLLTLSCLLVSFAN. A topological domain (periplasmic) is located at residue serine 107. Residues 108 to 128 form a helical membrane-spanning segment; it reads FSLLLIGRACLGLALGGFWAM. The Cytoplasmic segment spans residues 129-147; that stretch reads SASLTMRLVPPRTVPKALS. A helical membrane pass occupies residues 148-168; it reads VIFGAVSIALVIAAPLGSFLG. At 169 to 175 the chain is on the periplasmic side; that stretch reads ELIGWRN. The helical transmembrane segment at 176–196 threads the bilayer; sequence VFNAAAVMGVLCIFWIIKSLP. Residues 197 to 215 lie on the Cytoplasmic side of the membrane; the sequence is SLPGEPSHQKQNTFRLLQR. Residues 216 to 236 form a helical membrane-spanning segment; sequence PGVMAGMIAIFMSFAGQFAFF. Topologically, residues 237–255 are periplasmic; it reads TYIRPVYMNLAGFGVDGLT. The helical transmembrane segment at 256 to 276 threads the bilayer; the sequence is LVLLSFGIASFIGTSLSSFIL. Residues 277 to 281 are Cytoplasmic-facing; the sequence is KRSVK. Residues 282 to 302 form a helical membrane-spanning segment; the sequence is LALAGAPLILAVSALVLTLWG. The Periplasmic segment spans residues 303 to 305; it reads SDK. A helical transmembrane segment spans residues 306–326; the sequence is IVATGVAIIWGLTFALVPVGW. The Cytoplasmic portion of the chain corresponds to 327 to 343; that stretch reads STWITRSLADQAEKAGS. Residues 344-364 form a helical membrane-spanning segment; sequence IQVAVIQLANTCGAAIGGYAL. At 365–366 the chain is on the periplasmic side; the sequence is DN. Residues 367-387 form a helical membrane-spanning segment; the sequence is IGLTSPLMLSGTLMLLTALLV. Residues 388 to 396 are Cytoplasmic-facing; the sequence is TAKVKMKKS.

This sequence belongs to the major facilitator superfamily. DHA1 family. NepI (TC 2.A.1.2.26) subfamily.

The protein localises to the cell inner membrane. It carries out the reaction inosine(in) + H(+)(out) = inosine(out) + H(+)(in). The catalysed reaction is guanosine(in) + H(+)(out) = guanosine(out) + H(+)(in). Functionally, involved in the efflux of purine ribonucleosides, such as inosine and guanosine. This chain is Purine ribonucleoside efflux pump NepI, found in Shigella boydii serotype 4 (strain Sb227).